The following is a 323-amino-acid chain: tRNA U34 carboxymethyltransferase (323 aa).

Carboxy-S-adenosyl-L-methionine is bound by residues K91, W105, K110, G130, 181 to 182, M196, Y200, and R315; that span reads IE.

It belongs to the class I-like SAM-binding methyltransferase superfamily. CmoB family. Homotetramer.

It carries out the reaction carboxy-S-adenosyl-L-methionine + 5-hydroxyuridine(34) in tRNA = 5-carboxymethoxyuridine(34) in tRNA + S-adenosyl-L-homocysteine + H(+). Functionally, catalyzes carboxymethyl transfer from carboxy-S-adenosyl-L-methionine (Cx-SAM) to 5-hydroxyuridine (ho5U) to form 5-carboxymethoxyuridine (cmo5U) at position 34 in tRNAs. In Edwardsiella ictaluri (strain 93-146), this protein is tRNA U34 carboxymethyltransferase.